Reading from the N-terminus, the 239-residue chain is MINDVISPEFDENGRALRRIRSFVRRQGRLTKGQQLALDSYWPVMGVEYQAAPVDLNTLFGREAPIVLEIGFGMGTSLVTMATNNPQQNFLGIEVHSPGVGACLSSAHDAGLSNLRIMCHDAVEVLENMIPEASLDMVQLFFPDPWHKARHNKRRIVQTPFVELVKSKLKVGGVFHMATDWQPYAEHMLEVMSGVSGYLNLSEQNDYVPRPDSRPLTKFELRGQRLGHGVWDLMFERKE.

4 residues coordinate S-adenosyl-L-methionine: Glu69, Glu94, Asp121, and Asp144. Residue Asp144 is part of the active site. Lys148 is a substrate binding site. An interaction with RNA region spans residues 150-155; it reads RHNKRR. Residues Asp180 and 217-220 contribute to the substrate site; that span reads TKFE.

It belongs to the class I-like SAM-binding methyltransferase superfamily. TrmB family. Monomer.

It catalyses the reaction guanosine(46) in tRNA + S-adenosyl-L-methionine = N(7)-methylguanosine(46) in tRNA + S-adenosyl-L-homocysteine. It participates in tRNA modification; N(7)-methylguanine-tRNA biosynthesis. Functionally, catalyzes the formation of N(7)-methylguanine at position 46 (m7G46) in tRNA. In Yersinia pestis (strain Pestoides F), this protein is tRNA (guanine-N(7)-)-methyltransferase.